The chain runs to 82 residues: DNA-directed RNA polymerase subunit omega (82 aa).

This sequence belongs to the RNA polymerase subunit omega family. In terms of assembly, in cyanobacteria the RNAP catalytic core is composed of 2 alpha, 1 beta, 1 beta', 1 gamma and 1 omega subunit. When a sigma factor is associated with the core the holoenzyme is formed, which can initiate transcription.

The enzyme catalyses RNA(n) + a ribonucleoside 5'-triphosphate = RNA(n+1) + diphosphate. Functionally, promotes RNA polymerase assembly. Latches the N- and C-terminal regions of the beta' subunit thereby facilitating its interaction with the beta and alpha subunits. The sequence is that of DNA-directed RNA polymerase subunit omega from Trichodesmium erythraeum (strain IMS101).